Here is a 207-residue protein sequence, read N- to C-terminus: Dephospho-CoA kinase (207 aa).

One can recognise a DPCK domain in the interval 10–207 (ILGLTGGIGS…FYLTLRGGQS (198 aa)). 18-23 (GSGKSA) is an ATP binding site.

The protein belongs to the CoaE family.

The protein localises to the cytoplasm. It catalyses the reaction 3'-dephospho-CoA + ATP = ADP + CoA + H(+). It functions in the pathway cofactor biosynthesis; coenzyme A biosynthesis; CoA from (R)-pantothenate: step 5/5. Catalyzes the phosphorylation of the 3'-hydroxyl group of dephosphocoenzyme A to form coenzyme A. The protein is Dephospho-CoA kinase of Pseudomonas savastanoi pv. phaseolicola (strain 1448A / Race 6) (Pseudomonas syringae pv. phaseolicola (strain 1448A / Race 6)).